The following is a 335-amino-acid chain: Galactosylgalactosylxylosylprotein 3-beta-glucuronosyltransferase 3 (335 aa).

The Cytoplasmic segment spans residues 1–7 (MKLKLKN). The chain crosses the membrane as a helical; Signal-anchor for type II membrane protein span at residues 8–28 (VFLAYFLVSIAGLLYALVQLG). At 29–335 (QPCDCLPPLR…GQGSDPAIEV (307 aa)) the chain is on the lumenal side. UDP-alpha-D-glucuronate-binding positions include 82–84 (PTY), aspartate 113, arginine 156, arginine 161, and 194–196 (DDD). Aspartate 196 contributes to the Mn(2+) binding site. The tract at residues 243-252 (WEPNRPFPLD) is interaction with galactose moiety of substrate glycoprotein. Glutamate 281 (proton donor/acceptor) is an active-site residue. Residue asparagine 300 is glycosylated (N-linked (GlcNAc...) asparagine). UDP-alpha-D-glucuronate is bound at residue 308–310 (HTR). Positions 312–322 (EKPKMKQEEQL) are enriched in basic and acidic residues. Positions 312–335 (EKPKMKQEEQLQRQGQGSDPAIEV) are disordered.

It belongs to the glycosyltransferase 43 family. As to quaternary structure, homodimer; disulfide-linked. Interacts with PXYLP1; the interaction increases the 2-phosphoxylose phosphatase activity of PXYLP1 during completion of linkage region formation in a B3GAT3-mediated manner. Mn(2+) is required as a cofactor. Post-translationally, N-glycosylated. In terms of tissue distribution, expressed in heart, aorta, bone, and also in osteoblasts.

The protein localises to the golgi apparatus membrane. It is found in the golgi apparatus. The protein resides in the cis-Golgi network. It catalyses the reaction 3-O-(beta-D-galactosyl-(1-&gt;3)-beta-D-galactosyl-(1-&gt;4)-beta-D-xylosyl)-L-seryl-[protein] + UDP-alpha-D-glucuronate = 3-O-(beta-D-GlcA-(1-&gt;3)-beta-D-Gal-(1-&gt;3)-beta-D-Gal-(1-&gt;4)-beta-D-Xyl)-L-seryl-[protein] + UDP + H(+). The protein operates within protein modification; protein glycosylation. Functionally, glycosaminoglycans biosynthesis. Involved in forming the linkage tetrasaccharide present in heparan sulfate and chondroitin sulfate. Transfers a glucuronic acid moiety from the uridine diphosphate-glucuronic acid (UDP-GlcUA) to the common linkage region trisaccharide Gal-beta-1,3-Gal-beta-1,4-Xyl covalently bound to a Ser residue at the glycosaminylglycan attachment site of proteoglycans. Can also play a role in the biosynthesis of l2/HNK-1 carbohydrate epitope on glycoproteins. Stimulates 2-phosphoxylose phosphatase activity of PXYLP1 in presence of uridine diphosphate-glucuronic acid (UDP-GlcUA) during completion of linkage region formation. The protein is Galactosylgalactosylxylosylprotein 3-beta-glucuronosyltransferase 3 (B3gat3) of Mus musculus (Mouse).